We begin with the raw amino-acid sequence, 312 residues long: Protoheme IX farnesyltransferase (312 aa).

9 consecutive transmembrane segments (helical) span residues 31-51 (LLMK…GLFI), 58-78 (PLLS…AGAI), 107-127 (TALT…AICV), 130-150 (ISSI…TMWL), 157-177 (NIVI…SAVT), 184-204 (CLML…TLSL), 229-249 (YSIL…YFTD), 250-270 (IAGL…LCYA), and 286-306 (FKYS…EHCI).

It belongs to the UbiA prenyltransferase family. Protoheme IX farnesyltransferase subfamily.

Its subcellular location is the cell inner membrane. The enzyme catalyses heme b + (2E,6E)-farnesyl diphosphate + H2O = Fe(II)-heme o + diphosphate. The protein operates within porphyrin-containing compound metabolism; heme O biosynthesis; heme O from protoheme: step 1/1. Converts heme B (protoheme IX) to heme O by substitution of the vinyl group on carbon 2 of heme B porphyrin ring with a hydroxyethyl farnesyl side group. The sequence is that of Protoheme IX farnesyltransferase from Orientia tsutsugamushi (strain Ikeda) (Rickettsia tsutsugamushi).